A 51-amino-acid polypeptide reads, in one-letter code: uncharacterized protein (51 aa).

To E.coli YdaF.

This is an uncharacterized protein from Escherichia coli O157:H7.